The sequence spans 141 residues: Nucleoside diphosphate kinase (141 aa).

The ATP site is built by K11, F59, R87, T93, R104, and N114.

This sequence belongs to the NDK family. Homotetramer. Mg(2+) is required as a cofactor.

It localises to the cytoplasm. It catalyses the reaction a 2'-deoxyribonucleoside 5'-diphosphate + ATP = a 2'-deoxyribonucleoside 5'-triphosphate + ADP. The enzyme catalyses a ribonucleoside 5'-diphosphate + ATP = a ribonucleoside 5'-triphosphate + ADP. Functionally, major role in the synthesis of nucleoside triphosphates other than ATP. The ATP gamma phosphate is transferred to the NDP beta phosphate via a ping-pong mechanism, using a phosphorylated active-site intermediate. The chain is Nucleoside diphosphate kinase from Saccharophagus degradans (strain 2-40 / ATCC 43961 / DSM 17024).